A 352-amino-acid polypeptide reads, in one-letter code: Molybdenum import ATP-binding protein ModC (352 aa).

One can recognise an ABC transporter domain in the interval 1–229 (MLELNFSQTL…SVMNPWLPKE (229 aa)). Residue 31 to 38 (GVSGAGKT) participates in ATP binding. The 64-residue stretch at 289–352 (QTSIRNVLRA…AQIKSVSITA (64 aa)) folds into the Mop domain.

The protein belongs to the ABC transporter superfamily. Molybdate importer (TC 3.A.1.8) family. As to quaternary structure, the complex is composed of two ATP-binding proteins (ModC), two transmembrane proteins (ModB) and a solute-binding protein (ModA).

It is found in the cell inner membrane. The enzyme catalyses molybdate(out) + ATP + H2O = molybdate(in) + ADP + phosphate + H(+). In terms of biological role, part of the ABC transporter complex ModABC involved in molybdenum import. Responsible for energy coupling to the transport system. The protein is Molybdenum import ATP-binding protein ModC of Escherichia coli O6:K15:H31 (strain 536 / UPEC).